Consider the following 21-residue polypeptide: Dart gland peptide (21 aa).

Residues 1-21 are disordered; that stretch reads SINNTGGSGNRRLDKNGFAGQ. Asn-3 carries N-linked (GlcNAc...) asparagine glycosylation.

The protein resides in the secreted. The protein is Dart gland peptide of Cornu aspersum (Brown garden snail).